We begin with the raw amino-acid sequence, 289 residues long: ATP synthase gamma chain (289 aa).

It belongs to the ATPase gamma chain family. As to quaternary structure, F-type ATPases have 2 components, CF(1) - the catalytic core - and CF(0) - the membrane proton channel. CF(1) has five subunits: alpha(3), beta(3), gamma(1), delta(1), epsilon(1). CF(0) has three main subunits: a, b and c.

The protein localises to the cell inner membrane. Produces ATP from ADP in the presence of a proton gradient across the membrane. The gamma chain is believed to be important in regulating ATPase activity and the flow of protons through the CF(0) complex. In Coxiella burnetii (strain CbuK_Q154) (Coxiella burnetii (strain Q154)), this protein is ATP synthase gamma chain.